The following is a 232-amino-acid chain: Glycerol-3-phosphate acyltransferase (232 aa).

6 helical membrane-spanning segments follow: residues 4 to 24, 56 to 76, 90 to 110, 124 to 144, 152 to 172, and 191 to 211; these read FLAI…IIAG, VVTL…VGFF, IALS…TVFA, MLIG…LLAV, VGSI…KYVF, and SLDY…IYTH.

It belongs to the PlsY family. Probably interacts with PlsX.

The protein resides in the cell inner membrane. The catalysed reaction is an acyl phosphate + sn-glycerol 3-phosphate = a 1-acyl-sn-glycero-3-phosphate + phosphate. The protein operates within lipid metabolism; phospholipid metabolism. In terms of biological role, catalyzes the transfer of an acyl group from acyl-phosphate (acyl-PO(4)) to glycerol-3-phosphate (G3P) to form lysophosphatidic acid (LPA). This enzyme utilizes acyl-phosphate as fatty acyl donor, but not acyl-CoA or acyl-ACP. This Chlorobaculum tepidum (strain ATCC 49652 / DSM 12025 / NBRC 103806 / TLS) (Chlorobium tepidum) protein is Glycerol-3-phosphate acyltransferase.